We begin with the raw amino-acid sequence, 559 residues long: MNPLFGPNLFLLQQEQQGLAGPLGDSLGGDHFAGGGDLPPAPLSPAGPAAYSPPGPGPAPPAAMALRNDLGSNINVLKTLNLRFRCFLAKVHELERRNRLLEKQLQQALEEGKQGRRGLGRRDQAVQTGFVSPIRPLGLQLGARPAAVCSPSARVLGSPARSPAGPLAPSAASLSSSSTSTSTTYSSSARFMPGTIWSFSHARRLGPGLEPTLVQGPGLSWVHPDGVGVQIDTITPEIRALYNVLAKVKRERDEYKRRWEEEYTVRIQLQDRVNELQEEAQEADACQEELALKVEQLKAELVVFKGLMSNNLSELDTKIQEKAMKVDMDICRRIDITAKLCDVAQQRNCEDMIQMFQVPSMGGRKRERKAAVEEDTSLSESEGPRQPDGDEEESTALSINEEMQRMLNQLREYDFEDDCDSLTWEETEETLLLWEDFSGYAMAAAEAQGEQEDSLEKVIKDTESLFKTREKEYQETIDQIELELATAKNDMNRHLHEYMEMCSMKRGLDVQMETCRRLITQSGDRKSPAFTAVPLSDPPPPPSEAEDSDRDVSSDSSMR.

The tract at residues 21 to 57 is disordered; the sequence is GPLGDSLGGDHFAGGGDLPPAPLSPAGPAAYSPPGPG. Positions 39-57 are enriched in pro residues; that stretch reads PPAPLSPAGPAAYSPPGPG. The segment at 65-116 is LMNA binding; it reads ALRNDLGSNINVLKTLNLRFRCFLAKVHELERRNRLLEKQLQQALEEGKQGR. An IF rod domain is found at 73-526; it reads NINVLKTLNL…RLITQSGDRK (454 aa). The stretch at 85–117 forms a coiled coil; it reads RCFLAKVHELERRNRLLEKQLQQALEEGKQGRR. The disordered stretch occupies residues 158-187; the sequence is SPARSPAGPLAPSAASLSSSSTSTSTTYSS. A coiled-coil region spans residues 237–301; the sequence is EIRALYNVLA…LKVEQLKAEL (65 aa). Positions 360-394 are disordered; the sequence is SMGGRKRERKAAVEEDTSLSESEGPRQPDGDEEES. The segment at 450 to 525 is XCCR4 binding. Required for localization to the double-strand breaks (DSBs); the sequence is EQEDSLEKVI…RRLITQSGDR (76 aa). Residues 455–501 are a coiled coil; that stretch reads LEKVIKDTESLFKTREKEYQETIDQIELELATAKNDMNRHLHEYMEM. Positions 520–559 are disordered; the sequence is TQSGDRKSPAFTAVPLSDPPPPPSEAEDSDRDVSSDSSMR. The segment covering 550 to 559 has biased composition (basic and acidic residues); the sequence is RDVSSDSSMR.

It belongs to the intermediate filament family. Forms a heterotetramer with XRCC4. The interaction with XRCC4 is direct, involves LIG4-free XRCC4 and leads to relocalization of IFFO1 at the double-strand break (DSB) sites. Interacts with LMNA; the interaction forms an interior nucleoskeleton and the recruitment to DNA double-strand breaks. As to expression, ubiquitously expressed.

The protein resides in the nucleus. Its subcellular location is the nucleoplasm. It localises to the nucleus inner membrane. It is found in the nucleus matrix. Functionally, nuclear matrix protein involved in the immobilization of broken DNA ends and the suppression of chromosome translocation during DNA double-strand breaks (DSBs). Interacts with the nuclear lamina component LMNA, resulting in the formation of a nucleoskeleton that relocalizes to the DSB sites in a XRCC4-dependent manner and promotes the immobilization of the broken ends, thereby preventing chromosome translocation. Acts as a scaffold that allows the DNA repair protein XRCC4 and LMNA to assemble into a complex at the DSB sites. This is Non-homologous end joining factor IFFO1 from Homo sapiens (Human).